We begin with the raw amino-acid sequence, 237 residues long: tRNA (guanine-N(7)-)-methyltransferase (237 aa).

S-adenosyl-L-methionine contacts are provided by Glu-65, Glu-90, Asp-117, and Asp-140. The active site involves Asp-140. Substrate-binding positions include Lys-144, Asp-176, and 212–215; that span reads TKFE. The tract at residues 197–217 is disordered; it reads TCGPRQFSPRGERPETKFERR. The span at 206-217 shows a compositional bias: basic and acidic residues; it reads RGERPETKFERR.

Belongs to the class I-like SAM-binding methyltransferase superfamily. TrmB family.

The catalysed reaction is guanosine(46) in tRNA + S-adenosyl-L-methionine = N(7)-methylguanosine(46) in tRNA + S-adenosyl-L-homocysteine. The protein operates within tRNA modification; N(7)-methylguanine-tRNA biosynthesis. Its function is as follows. Catalyzes the formation of N(7)-methylguanine at position 46 (m7G46) in tRNA. The polypeptide is tRNA (guanine-N(7)-)-methyltransferase (Alkalilimnicola ehrlichii (strain ATCC BAA-1101 / DSM 17681 / MLHE-1)).